The primary structure comprises 515 residues: 1-pyrroline-5-carboxylate dehydrogenase 2 (515 aa).

Residues Glu286 and Cys320 contribute to the active site.

It belongs to the aldehyde dehydrogenase family. RocA subfamily.

It catalyses the reaction L-glutamate 5-semialdehyde + NAD(+) + H2O = L-glutamate + NADH + 2 H(+). Its pathway is amino-acid degradation; L-proline degradation into L-glutamate; L-glutamate from L-proline: step 2/2. Its function is as follows. Important for the use of proline as a sole carbon and energy source or a sole nitrogen source. This chain is 1-pyrroline-5-carboxylate dehydrogenase 2, found in Bacillus subtilis (strain 168).